A 415-amino-acid polypeptide reads, in one-letter code: Polyketide biosynthesis malonyl-ACP decarboxylase PksF (415 aa).

The Ketosynthase family 3 (KS3) domain occupies leucine 6–asparagine 407.

The protein belongs to the thiolase-like superfamily. Beta-ketoacyl-ACP synthases family.

Its subcellular location is the cytoplasm. The enzyme catalyses malonyl-[ACP] + H(+) = acetyl-[ACP] + CO2. It participates in antibiotic biosynthesis; bacillaene biosynthesis. In terms of biological role, involved in some intermediate steps for the synthesis of the antibiotic polyketide bacillaene which is involved in secondary metabolism. It decarboxylates selectively the malonyl group attached on the acyl-carrier-protein AcpK (Mal-AcpK). The polypeptide is Polyketide biosynthesis malonyl-ACP decarboxylase PksF (pksF) (Bacillus subtilis (strain 168)).